Reading from the N-terminus, the 121-residue chain is Large ribosomal subunit protein uL22 (121 aa).

It belongs to the universal ribosomal protein uL22 family. As to quaternary structure, part of the 50S ribosomal subunit.

Functionally, this protein binds specifically to 23S rRNA; its binding is stimulated by other ribosomal proteins, e.g. L4, L17, and L20. It is important during the early stages of 50S assembly. It makes multiple contacts with different domains of the 23S rRNA in the assembled 50S subunit and ribosome. Its function is as follows. The globular domain of the protein is located near the polypeptide exit tunnel on the outside of the subunit, while an extended beta-hairpin is found that lines the wall of the exit tunnel in the center of the 70S ribosome. This chain is Large ribosomal subunit protein uL22, found in Micrococcus luteus (strain ATCC 4698 / DSM 20030 / JCM 1464 / CCM 169 / CCUG 5858 / IAM 1056 / NBRC 3333 / NCIMB 9278 / NCTC 2665 / VKM Ac-2230) (Micrococcus lysodeikticus).